The chain runs to 514 residues: Voltage-gated potassium channel regulatory subunit KCNG1 (514 aa).

Topologically, residues 1 to 224 (MTLLPGDNSH…DMVERPHSGL (224 aa)) are cytoplasmic. Residues 180–196 (MEREEEEEPLDSEDQES) are compositionally biased toward acidic residues. A disordered region spans residues 180-205 (MEREEEEEPLDSEDQESEGPSASEGR). Residues 225-246 (PGKVFACLSVLFVTVTAVNLSV) form a helical membrane-spanning segment. Residues 247–267 (STLPSLREEEEQGQCSQMCHN) lie on the Extracellular side of the membrane. A helical transmembrane segment spans residues 268–289 (VFIVESVCVGWFSLEFLLRFIQ). At 290-300 (APSKFAFLRSP) the chain is on the cytoplasmic side. Residues 301–321 (LTLIDLVAILPYYVTLLVDGA) traverse the membrane as a helical segment. Residues 322-338 (ASSRRKPSTGNSYLDKV) lie on the Extracellular side of the membrane. The helical; Voltage-sensor transmembrane segment at 339-359 (GLVLRVLRALRILYVMRLARH) threads the bilayer. At 360-374 (SLGLQTLGLTARRCT) the chain is on the cytoplasmic side. The chain crosses the membrane as a helical span at residues 375-396 (REFGLLLLFLCVAIALFAPLLY). Residues 397–411 (VIENEMADSPEFTSI) lie on the Extracellular side of the membrane. Residues 412-423 (PACYWWAVITMT) constitute an intramembrane region (helical). Residues 424-429 (TVGYGD) carry the Selectivity filter motif. Residues 424–431 (TVGYGDMV) lie within the membrane without spanning it. The Extracellular segment spans residues 432–438 (PRSTPGQ). Residues 439 to 467 (VVALSSILSGILLMAFPVTSIFHTFSRSY) form a helical membrane-spanning segment. Topologically, residues 468–514 (LELKQEQERVLIRRAQYLIKTKSQLSGMSQDSDILFGSASSDTRDNN) are cytoplasmic.

This sequence belongs to the potassium channel family. G (TC 1.A.1.2) subfamily. Kv6.1/KCNG1 sub-subfamily. In terms of assembly, heterotetramer with KCNB1 or KCNB2.

It localises to the cell membrane. Regulatory alpha-subunit of the voltage-gated potassium (Kv) channel which, when coassembled with KCNB1 or KCNB2, can modulate their expression and their gating kinetics by acting on deactivation upon repolarization and inactivation during maintained depolarization. Potassium channel subunit that does not form functional channels by itself. This Mus musculus (Mouse) protein is Voltage-gated potassium channel regulatory subunit KCNG1.